A 435-amino-acid polypeptide reads, in one-letter code: Histidinol dehydrogenase (435 aa).

Positions 131, 189, and 212 each coordinate NAD(+). 3 residues coordinate substrate: serine 238, glutamine 260, and histidine 263. The Zn(2+) site is built by glutamine 260 and histidine 263. Residues glutamate 327 and histidine 328 each act as proton acceptor in the active site. Substrate is bound by residues histidine 328, aspartate 361, glutamate 415, and histidine 420. Aspartate 361 is a Zn(2+) binding site. Histidine 420 contributes to the Zn(2+) binding site.

The protein belongs to the histidinol dehydrogenase family. Homodimer. Zn(2+) is required as a cofactor.

The catalysed reaction is L-histidinol + 2 NAD(+) + H2O = L-histidine + 2 NADH + 3 H(+). It participates in amino-acid biosynthesis; L-histidine biosynthesis; L-histidine from 5-phospho-alpha-D-ribose 1-diphosphate: step 9/9. Functionally, catalyzes the sequential NAD-dependent oxidations of L-histidinol to L-histidinaldehyde and then to L-histidine. The sequence is that of Histidinol dehydrogenase (hisD) from Buchnera aphidicola subsp. Schizaphis graminum (strain Sg).